The sequence spans 113 residues: Putative pterin-4-alpha-carbinolamine dehydratase (113 aa).

This sequence belongs to the pterin-4-alpha-carbinolamine dehydratase family.

The enzyme catalyses (4aS,6R)-4a-hydroxy-L-erythro-5,6,7,8-tetrahydrobiopterin = (6R)-L-erythro-6,7-dihydrobiopterin + H2O. The protein is Putative pterin-4-alpha-carbinolamine dehydratase of Hydrogenovibrio crunogenus (strain DSM 25203 / XCL-2) (Thiomicrospira crunogena).